We begin with the raw amino-acid sequence, 188 residues long: Probable nicotinate-nucleotide adenylyltransferase (188 aa).

The protein belongs to the NadD family.

It carries out the reaction nicotinate beta-D-ribonucleotide + ATP + H(+) = deamido-NAD(+) + diphosphate. Its pathway is cofactor biosynthesis; NAD(+) biosynthesis; deamido-NAD(+) from nicotinate D-ribonucleotide: step 1/1. Catalyzes the reversible adenylation of nicotinate mononucleotide (NaMN) to nicotinic acid adenine dinucleotide (NaAD). The chain is Probable nicotinate-nucleotide adenylyltransferase from Listeria monocytogenes serotype 4a (strain HCC23).